The chain runs to 480 residues: Ribulose bisphosphate carboxylase large chain (480 aa).

Residues 1–2 constitute a propeptide that is removed on maturation; sequence MS. The residue at position 3 (proline 3) is an N-acetylproline. Position 14 is an N6,N6,N6-trimethyllysine (lysine 14). Substrate-binding residues include asparagine 123 and threonine 173. Lysine 175 functions as the Proton acceptor in the catalytic mechanism. Lysine 177 lines the substrate pocket. Lysine 201, aspartate 203, and glutamate 204 together coordinate Mg(2+). At lysine 201 the chain carries N6-carboxylysine. The Proton acceptor role is filled by histidine 294. Residues arginine 295, histidine 327, and serine 379 each contribute to the substrate site.

It belongs to the RuBisCO large chain family. Type I subfamily. As to quaternary structure, heterohexadecamer of 8 large chains and 8 small chains; disulfide-linked. The disulfide link is formed within the large subunit homodimers. Mg(2+) is required as a cofactor. Post-translationally, the disulfide bond which can form in the large chain dimeric partners within the hexadecamer appears to be associated with oxidative stress and protein turnover.

Its subcellular location is the plastid. It is found in the chloroplast. It catalyses the reaction 2 (2R)-3-phosphoglycerate + 2 H(+) = D-ribulose 1,5-bisphosphate + CO2 + H2O. The enzyme catalyses D-ribulose 1,5-bisphosphate + O2 = 2-phosphoglycolate + (2R)-3-phosphoglycerate + 2 H(+). In terms of biological role, ruBisCO catalyzes two reactions: the carboxylation of D-ribulose 1,5-bisphosphate, the primary event in carbon dioxide fixation, as well as the oxidative fragmentation of the pentose substrate in the photorespiration process. Both reactions occur simultaneously and in competition at the same active site. In Gossypium barbadense (Sea Island cotton), this protein is Ribulose bisphosphate carboxylase large chain.